The following is a 230-amino-acid chain: Proteasome subunit beta 2 (230 aa).

The span at 1–10 (MHDPENRLTD) shows a compositional bias: basic and acidic residues. Residues 1–29 (MHDPENRLTDAYEPEVGNLPNEDSGRDEE) are disordered. A propeptide spans 1–35 (MHDPENRLTDAYEPEVGNLPNEDSGRDEENVVKTG) (removed in mature form; by autocatalysis). The active-site Nucleophile is the threonine 36.

The protein belongs to the peptidase T1B family. The 20S proteasome core is composed of 14 alpha and 14 beta subunits that assemble into four stacked heptameric rings, resulting in a barrel-shaped structure. The two inner rings, each composed of seven catalytic beta subunits, are sandwiched by two outer rings, each composed of seven alpha subunits. The catalytic chamber with the active sites is on the inside of the barrel. Has a gated structure, the ends of the cylinder being occluded by the N-termini of the alpha-subunits. Is capped at one or both ends by the proteasome regulatory ATPase, PAN.

It localises to the cytoplasm. It catalyses the reaction Cleavage of peptide bonds with very broad specificity.. With respect to regulation, the formation of the proteasomal ATPase PAN-20S proteasome complex, via the docking of the C-termini of PAN into the intersubunit pockets in the alpha-rings, triggers opening of the gate for substrate entry. Interconversion between the open-gate and close-gate conformations leads to a dynamic regulation of the 20S proteasome proteolysis activity. Functionally, component of the proteasome core, a large protease complex with broad specificity involved in protein degradation. This chain is Proteasome subunit beta 2, found in Haloarcula marismortui (strain ATCC 43049 / DSM 3752 / JCM 8966 / VKM B-1809) (Halobacterium marismortui).